A 122-amino-acid polypeptide reads, in one-letter code: Small ribosomal subunit protein uS13 (122 aa).

Residues 95-122 are disordered; the sequence is GLPVRGQRTHTNARTRKGKAKPIAGKKK.

Belongs to the universal ribosomal protein uS13 family. Part of the 30S ribosomal subunit. Forms a loose heterodimer with protein S19. Forms two bridges to the 50S subunit in the 70S ribosome.

Functionally, located at the top of the head of the 30S subunit, it contacts several helices of the 16S rRNA. In the 70S ribosome it contacts the 23S rRNA (bridge B1a) and protein L5 of the 50S subunit (bridge B1b), connecting the 2 subunits; these bridges are implicated in subunit movement. Contacts the tRNAs in the A and P-sites. The sequence is that of Small ribosomal subunit protein uS13 from Sphingopyxis alaskensis (strain DSM 13593 / LMG 18877 / RB2256) (Sphingomonas alaskensis).